Reading from the N-terminus, the 166-residue chain is Ribosome maturation factor RimM (166 aa).

Positions 94 to 166 (EDEFYITDLN…AILNYKRDEL (73 aa)) constitute a PRC barrel domain.

It belongs to the RimM family. In terms of assembly, binds ribosomal protein uS19.

The protein resides in the cytoplasm. Functionally, an accessory protein needed during the final step in the assembly of 30S ribosomal subunit, possibly for assembly of the head region. Essential for efficient processing of 16S rRNA. May be needed both before and after RbfA during the maturation of 16S rRNA. It has affinity for free ribosomal 30S subunits but not for 70S ribosomes. This is Ribosome maturation factor RimM from Rickettsia bellii (strain RML369-C).